We begin with the raw amino-acid sequence, 327 residues long: Aspartate--ammonia ligase (327 aa).

It belongs to the class-II aminoacyl-tRNA synthetase family. AsnA subfamily.

The protein localises to the cytoplasm. The enzyme catalyses L-aspartate + NH4(+) + ATP = L-asparagine + AMP + diphosphate + H(+). It functions in the pathway amino-acid biosynthesis; L-asparagine biosynthesis; L-asparagine from L-aspartate (ammonia route): step 1/1. The polypeptide is Aspartate--ammonia ligase (Bacillus mycoides (strain KBAB4) (Bacillus weihenstephanensis)).